Consider the following 230-residue polypeptide: Acyl-protein thioesterase 1 (230 aa).

Catalysis depends on charge relay system residues Ser119, Asp174, and His208. The residue at position 224 (Lys224) is an N6-acetyllysine.

It belongs to the AB hydrolase superfamily. AB hydrolase 2 family. As to quaternary structure, homodimer.

The protein resides in the cytoplasm. The protein localises to the cell membrane. It is found in the nucleus membrane. It localises to the endoplasmic reticulum. It carries out the reaction S-hexadecanoyl-L-cysteinyl-[protein] + H2O = L-cysteinyl-[protein] + hexadecanoate + H(+). The catalysed reaction is 1-hexadecanoyl-sn-glycero-3-phosphocholine + H2O = sn-glycerol 3-phosphocholine + hexadecanoate + H(+). The enzyme catalyses a 1-(9Z-octadecenoyl)-2-acyl-sn-glycero-3-phosphocholine + H2O = a 2-acyl-sn-glycero-3-phosphocholine + (9Z)-octadecenoate + H(+). Its function is as follows. Acts as an acyl-protein thioesterase. Hydrolyzes fatty acids from S-acylated cysteine residues in proteins such as trimeric G alpha proteins or HRAS. Acts as a palmitoyl thioesterase that catalyzes depalmitoylation of proteins, such as ADRB2, KCNMA1 and SQSTM1. Acts as a negative regulator of autophagy by mediating palmitoylation of SQSTM1, decreasing affinity between SQSTM1 and ATG8 proteins and recruitment of ubiquitinated cargo proteins to autophagosomes. Acts as a lysophospholipase and hydrolyzes lysophosphatidylcholine (lyso-PC). Also hydrolyzes lysophosphatidylethanolamine (lyso-PE), lysophosphatidylinositol (lyso-PI) and lysophosphatidylserine (lyso-PS). Has much higher thioesterase activity than lysophospholipase activity. Contributes to the production of lysophosphatidic acid (LPA) during blood coagulation by recognizing and cleaving plasma phospholipids to generate lysophospholipids which in turn act as substrates for ENPP2 to produce LPA. The chain is Acyl-protein thioesterase 1 (LYPLA1) from Pongo abelii (Sumatran orangutan).